A 1263-amino-acid chain; its full sequence is MPFISETASAIKRRFGFNDRPAPSESLRSVPCTPEANTVSRDNHTHQSLLFSSAVRSMPELDEDGAICAGSAQISRSQSFEFNEDPAFWKDHNVQVIIRTRPLSSSEISVQGNNKCVRQDNGQAITWIGNPESRFTFDLVADENVSQEQMFKVAGVPMVENVVAGYNSCMFAYGQTGSGKTHTMLGDIEGGTRRHSVNCGMTPRVFEYLFSRIQKEKEVRKEEKLHFTCRCSFLEIYNEQILDLLDPSSYNLQLREDHKKGIHVENLKEIEVSSARDVIQQLMQGAANRKVAATNMNRASSRSHSVFTCIIESKWVSQGVTHHRFARLNLVDLAGSERQKSSGAEGERLKEATNINKSLSTLGLVIMNLVSVSNGKSVHVPYRDSKLTFLLQDSLGGNSKTIIIANISPSSSCSLETLSTLKFAQRAKLIKNNAIVNEDASGDVIAMRLQIQQLKKEVTRLRGMGGVDNQDMDTISMGCPASPMSLKWDGFNGSFTPLTTHKRMSKVKDYEVALVGAFRREREKDVALQALTAENEASMKLEKKREDEIRGLKMMLKLRDSAIKSLQGVTSGKIPVEAHLQKEKGDLMKEIEVLRAQVDRNQEVTKFATENLRLKEEIRRLKSQGEEGERDILNQQIQALQAKLLEALDWKLMHESDSSMVKEDGNISNMFCSNQNQESKKLSSIQDENEFLRMQAIQNRAEMESLQKSLSFSLDEKERLQKLVDNLSNELEGKIRSSGMVGDDDQMEVKTMVQAIACVSQREAEAHETAIKLSKENDDLRQKIKVLIEDNNKLIELYEQVAEENSSRAWGKIETDSSSNNADAQNSAEIALEVEKSAAEEQKKMIGNLENQLTEMHDENEKLMSLYENAMKEKDELKRLLSSPDQKKPIEANSDTEMELCNISSEKSTEDLNSAKLKLELAQEKLSISAKTIGVFSSLEENILDIIKLSKESKETEEKVKEHQSELGSIKTVSDQTNARKEVAEKKLAALRCSLSNFASSAVYFQQREERARAHVNSFSGYLNQKNEELDVIRSHKREIDAAMGKIQQSEAELKSNIVMLKIKVDEENKRHEEEGVLCTIDNILRTGKATDLLKSQEEKTKLQSEMKLSREKLASVRKEVDDMTKKSLKLEKEIKTMETEIEKSSKTRTESEMELENTIQEKQTIQEMEEQGMSEIQNMIIEIHQLVFESDLRKEEAMIIREELIAEELRAKDVHTNMIERVENALKTLENQNNSVSGKIEEEVENVLSLVHEASRLLEVSH.

Positions 21–44 (PAPSESLRSVPCTPEANTVSRDNH) are disordered. The span at 35-44 (EANTVSRDNH) shows a compositional bias: polar residues. The Kinesin motor domain maps to 93–430 (NVQVIIRTRP…LKFAQRAKLI (338 aa)). 174–181 (GQTGSGKT) is a binding site for ATP. Coiled coils occupy residues 679-737 (SKKL…KIRS), 764-805 (AEAH…AEEN), 831-881 (ALEV…KRLL), 905-966 (SEKS…HQSE), 1091-1168 (TDLL…TIQE), and 1193-1251 (LRKE…VLSL).

It belongs to the TRAFAC class myosin-kinesin ATPase superfamily. Kinesin family. KIN-12 subfamily.

The chain is Kinesin-like protein KIN-12E from Arabidopsis thaliana (Mouse-ear cress).